A 672-amino-acid polypeptide reads, in one-letter code: Outer dynein arm-docking complex subunit 4 (672 aa).

TPR repeat units lie at residues phenylalanine 13–aspartate 46, asparagine 48–phenylalanine 80, cysteine 81–arginine 114, leucine 275–glutamate 311, glycine 320–tyrosine 353, serine 360–threonine 393, threonine 397–glutamate 430, and leucine 437–valine 470. The span at arginine 527 to aspartate 544 shows a compositional bias: basic and acidic residues. A disordered region spans residues arginine 527–glutamate 672. The span at glutamate 545–phenylalanine 555 shows a compositional bias: acidic residues. 2 stretches are compositionally biased toward basic and acidic residues: residues glutamate 595 to glycine 650 and glycine 658 to glutamate 672.

Component of the outer dynein arm-docking complex along with ODAD1, ODAD2 and ODAD3. Interacts with ODAD1; this interaction may facilitate the recruitment and/or attachment of outer dynein arm docking complex proteins, including ODAD1, ODAD3 and ODAD2, to ciliary axonemes. Interacts with components of the IFT complex A, including IFT140, TTC21B/IFT139 and WDR19/IFT144, and the IFT complex B, including IFT46, IFT52 and IFT57. Interacts with CFAP53. In terms of tissue distribution, expressed in the nasal mucosa (at protein level).

The protein localises to the cytoplasm. Its subcellular location is the cytoskeleton. The protein resides in the cilium axoneme. Component of the outer dynein arm-docking complex (ODA-DC) that mediates outer dynein arms (ODA) binding onto the doublet microtubule. Plays an essential role for the assembly of ODA-DC and for the docking of ODA in ciliary axoneme. The sequence is that of Outer dynein arm-docking complex subunit 4 from Homo sapiens (Human).